Consider the following 367-residue polypeptide: Chorismate synthase (367 aa).

NADP(+) is bound by residues R48 and R54. FMN-binding positions include 125–127 (RSS), 238–239 (NA), G278, 293–297 (KPTSS), and R319.

It belongs to the chorismate synthase family. In terms of assembly, homotetramer. It depends on FMNH2 as a cofactor.

It carries out the reaction 5-O-(1-carboxyvinyl)-3-phosphoshikimate = chorismate + phosphate. It functions in the pathway metabolic intermediate biosynthesis; chorismate biosynthesis; chorismate from D-erythrose 4-phosphate and phosphoenolpyruvate: step 7/7. Its function is as follows. Catalyzes the anti-1,4-elimination of the C-3 phosphate and the C-6 proR hydrogen from 5-enolpyruvylshikimate-3-phosphate (EPSP) to yield chorismate, which is the branch point compound that serves as the starting substrate for the three terminal pathways of aromatic amino acid biosynthesis. This reaction introduces a second double bond into the aromatic ring system. This Xanthomonas campestris pv. campestris (strain B100) protein is Chorismate synthase.